Consider the following 210-residue polypeptide: Ribosomal RNA small subunit methyltransferase G (210 aa).

S-adenosyl-L-methionine-binding positions include G76, L81, V127–E128, and R142.

This sequence belongs to the methyltransferase superfamily. RNA methyltransferase RsmG family.

It is found in the cytoplasm. The catalysed reaction is guanosine(527) in 16S rRNA + S-adenosyl-L-methionine = N(7)-methylguanosine(527) in 16S rRNA + S-adenosyl-L-homocysteine. In terms of biological role, specifically methylates the N7 position of guanine in position 527 of 16S rRNA. The protein is Ribosomal RNA small subunit methyltransferase G of Vibrio atlanticus (strain LGP32) (Vibrio splendidus (strain Mel32)).